The following is a 35-amino-acid chain: Cupiennin-1d (35 aa).

Glu35 is modified (glutamic acid 1-amide).

This sequence belongs to the cationic peptide 04 (cupiennin) family. 01 subfamily. Expressed by the venom gland.

It localises to the secreted. In terms of biological role, has antimicrobial activity against B.subtilis, E.coli, E.faecalis, P.aeruginosa, and S.aureus. Has insecticidal and hemolytic activities. Probably acts by disturbing membrane function with its amphipathic structure. This is Cupiennin-1d from Cupiennius salei (American wandering spider).